Reading from the N-terminus, the 262-residue chain is MDINASRALANVYDLPDDFFPKIDDLVRDAKDALEPYWKSDSIKKHVLIATHFVDLIEDFWQTTQGMHEIAESLRAVIPPTTAPVPTGYLIQHEEAEEIPLGDLFKHQEERIVSFQPDYPITARIHAHLKAYAKINEESLDRARRLLWWHYNCLLWGEANVTNYISRLRTWLSTPEKYRGRDAPTIEAITRPIQVAQGGRKTSSGTRKPRGLEPRRRKVKTTFVYGRRRSKSRERRAPSPQRAGSPLPRSSSSHHRSPSPRK.

The disordered stretch occupies residues 183–262; it reads APTIEAITRP…SHHRSPSPRK (80 aa). The Bipartite nuclear localization signal motif lies at 215–233; that stretch reads RRRKVKTTFVYGRRRSKSR. The segment covering 215-234 has biased composition (basic residues); it reads RRRKVKTTFVYGRRRSKSRE. Phosphoserine; by host occurs at positions 232, 239, and 245. Basic residues predominate over residues 252-262; that stretch reads SSHHRSPSPRK. The segment at 254 to 260 is RNA binding; that stretch reads HHRSPSP.

This sequence belongs to the avihepadnavirus core antigen family. In terms of assembly, homodimerizes, then multimerizes.

The protein resides in the virion. The protein localises to the host cytoplasm. Its function is as follows. Self assembles to form an icosahedral capsid. Most capsid appear to be large particles with an icosahedral symmetry of T=4 and consist of 240 copies of capsid protein, though a fraction forms smaller T=3 particles consisting of 180 capsid proteins. Entering capsid are transported along microtubules to the nucleus. Phosphorylation of the capsid is thought to induce exposure of nuclear localization signal in the C-terminal portion of the capsid protein that allows binding to the nuclear pore complex via the importin (karyopherin-) alpha and beta. Capsids are imported in intact form through the nuclear pore into the nuclear basket, where it probably binds NUP153. Only capsids that contain the mature viral genome can release the viral DNA and capsid protein into the nucleoplasm. Immature capsids get stucked in the basket. Capsids encapsulate the pre-genomic RNA and the P protein. Pre-genomic RNA is reverse transcribed into DNA while the capsid is still in the cytoplasm. The capsid can then either be directed to the nucleus, providing more genome for transcription, or bud through the endoplasmic reticulum to provide new virions. In Anas (ducks), this protein is Capsid protein (C).